The following is an 802-amino-acid chain: Bifunctional purine biosynthetic protein ADE5,7 (802 aa).

The tract at residues 1 to 450 (MLNILVLGNG…QNSESSKVAI (450 aa)) is GARS. Positions 114-330 (KRFMSKHNIP…LAQVFLAAAE (217 aa)) constitute an ATP-grasp domain. 141–203 (QAHTDKAFVI…EQFLEGDEIS (63 aa)) is a binding site for ATP. Mg(2+)-binding residues include glutamate 298 and asparagine 300. The AIRS stretch occupies residues 451–802 (TYADSGVSVD…CVIENGTKLY (352 aa)). Phosphoserine occurs at positions 455 and 458.

In the N-terminal section; belongs to the GARS family. It in the C-terminal section; belongs to the AIR synthase family. It depends on Mg(2+) as a cofactor. Mn(2+) serves as cofactor.

The protein localises to the cytoplasm. The enzyme catalyses 5-phospho-beta-D-ribosylamine + glycine + ATP = N(1)-(5-phospho-beta-D-ribosyl)glycinamide + ADP + phosphate + H(+). The catalysed reaction is 2-formamido-N(1)-(5-O-phospho-beta-D-ribosyl)acetamidine + ATP = 5-amino-1-(5-phospho-beta-D-ribosyl)imidazole + ADP + phosphate + H(+). It functions in the pathway purine metabolism; IMP biosynthesis via de novo pathway; 5-amino-1-(5-phospho-D-ribosyl)imidazole from N(2)-formyl-N(1)-(5-phospho-D-ribosyl)glycinamide: step 2/2. The protein operates within purine metabolism; IMP biosynthesis via de novo pathway; N(1)-(5-phospho-D-ribosyl)glycinamide from 5-phospho-alpha-D-ribose 1-diphosphate: step 2/2. In terms of biological role, catalyzes the second and fifth step in the 'de novo' purine biosynthesis pathway; contains phosphoribosylamine--glycine ligase (GARS) and phosphoribosylformylglycinamidine cyclo-ligase (AIRS) activities. This is Bifunctional purine biosynthetic protein ADE5,7 from Saccharomyces cerevisiae (strain ATCC 204508 / S288c) (Baker's yeast).